We begin with the raw amino-acid sequence, 693 residues long: Elongation factor G (693 aa).

The tr-type G domain maps to 8 to 282; that stretch reads EKTRNIGIMA…AVIDYLPSPL (275 aa). GTP contacts are provided by residues 17–24, 81–85, and 135–138; these read AHIDAGKT, DTPGH, and NKMD.

This sequence belongs to the TRAFAC class translation factor GTPase superfamily. Classic translation factor GTPase family. EF-G/EF-2 subfamily.

The protein localises to the cytoplasm. In terms of biological role, catalyzes the GTP-dependent ribosomal translocation step during translation elongation. During this step, the ribosome changes from the pre-translocational (PRE) to the post-translocational (POST) state as the newly formed A-site-bound peptidyl-tRNA and P-site-bound deacylated tRNA move to the P and E sites, respectively. Catalyzes the coordinated movement of the two tRNA molecules, the mRNA and conformational changes in the ribosome. The sequence is that of Elongation factor G from Staphylococcus carnosus (strain TM300).